The sequence spans 430 residues: GTPase Obg (430 aa).

In terms of domain architecture, Obg spans 1–158; it reads MFIDKAKIYL…LTVVLELKLI (158 aa). The OBG-type G domain maps to 159–330; it reads ADVGLVGFPN…LLSYVSKRLK (172 aa). Residues 165 to 172, 190 to 194, 212 to 215, 282 to 285, and 311 to 313 each bind GTP; these read GFPNVGKS, FTTLT, DIPG, NKTD, and SAA. Mg(2+) is bound by residues S172 and T192. The region spanning 351-430 is the OCT domain; the sequence is KYEETEDKYH…MYSVEFEYFN (80 aa).

Belongs to the TRAFAC class OBG-HflX-like GTPase superfamily. OBG GTPase family. In terms of assembly, monomer. Mg(2+) is required as a cofactor.

It localises to the cytoplasm. An essential GTPase which binds GTP, GDP and possibly (p)ppGpp with moderate affinity, with high nucleotide exchange rates and a fairly low GTP hydrolysis rate. Plays a role in control of the cell cycle, stress response, ribosome biogenesis and in those bacteria that undergo differentiation, in morphogenesis control. This chain is GTPase Obg, found in Alkaliphilus oremlandii (strain OhILAs) (Clostridium oremlandii (strain OhILAs)).